The following is a 103-amino-acid chain: Large ribosomal subunit protein bL21 (103 aa).

The protein belongs to the bacterial ribosomal protein bL21 family. As to quaternary structure, part of the 50S ribosomal subunit. Contacts protein L20.

Its function is as follows. This protein binds to 23S rRNA in the presence of protein L20. The sequence is that of Large ribosomal subunit protein bL21 from Alkaliphilus oremlandii (strain OhILAs) (Clostridium oremlandii (strain OhILAs)).